The following is a 649-amino-acid chain: Acetylcholinesterase (649 aa).

The first 38 residues, 1-38 (MAISCRQSRVLPMSLPLPLTIPLPLVLVLSLHLSGVCG), serve as a signal peptide directing secretion. Cys-104 and Cys-131 are joined by a disulfide. Residues Asn-126 and Asn-174 are each glycosylated (N-linked (GlcNAc...) asparagine). The active-site Acyl-ester intermediate is Ser-276. Cys-330 and Cys-345 form a disulfide bridge. Asn-331 carries an N-linked (GlcNAc...) asparagine glycan. Residues Glu-405 and His-518 each act as charge relay system in the active site. A disulfide bridge connects residues Cys-480 and Cys-598. Asn-531 is a glycosylation site (N-linked (GlcNAc...) asparagine). Ser-619 carries the GPI-anchor amidated serine lipid modification. Residues 620 to 649 (GSASISPRLQLLGIAALIYICAALRTKRVF) constitute a propeptide, removed in mature form.

The protein belongs to the type-B carboxylesterase/lipase family. Homodimer; disulfide-linked. The active unit is formed by non-covalent association of the 55 kDa and 16 kDa subunits. Proteolytic cleavage into the 16 kDa subunit and the 55 kDa subunits originates from the hydrophilic peptide, aa 148-180, and is associated with excretion out of the cell. In terms of processing, neither N-glycosylation nor dimerization is required for enzyme activity or substrate specificity, but protects the protein against proteolytic digestion.

The protein resides in the synapse. Its subcellular location is the cell membrane. It catalyses the reaction acetylcholine + H2O = choline + acetate + H(+). Rapidly hydrolyzes choline released into the synapse. It can hydrolyze butyrylthiocholine. The sequence is that of Acetylcholinesterase (Ace) from Drosophila melanogaster (Fruit fly).